A 124-amino-acid polypeptide reads, in one-letter code: Protein YobA (124 aa).

Residues 1 to 26 (MASTARSLRYALAILTTSLVTPSVWA) form the signal peptide. Cu cation contacts are provided by His27 and His113.

This sequence belongs to the CopC family.

It localises to the periplasm. The protein is Protein YobA (yobA) of Escherichia coli O6:H1 (strain CFT073 / ATCC 700928 / UPEC).